The primary structure comprises 446 residues: MREILHIQGGQCGNQIGAKFWEVICDEHGIDHTGKYSGDSDLQLERINVYYNEASGGRYVPRAVLMDLEPGTMDSVRSGPYGQIFRPDNFVFGQSGAGNNWAKGHYTEGAELIDSVLDVVRKEAENCDCLQGFQVCHSLGGGTGSGMGTLLISKIREEYPDRMMLTFSVFPSPKVSDTVVEPYNATLSVHQLVENADECMVLDNEALYDICFRTLKLATPTFGDLNHLISATMSGVTCCLRFPGQLNSDLRKLAVNLIPFPRLHFFMVGFAPLTSRGSQQYRALTVPELTQQMWDAKNMMCAADPRHGRYLTASAMFRGKMSTKEVDEQMLNVQNKNSSYFVEWIPNNVKSSVCDIPPIGLKMASTFIGNSTSIQEMFRRVSEQFTAMFRRKAFLHWYTGEGMDEMEFTEAESNMNDLVAEYQQYQDATAEEEDYEEEEEDEEVAA.

Residues Q11, E69, S138, G142, T143, G144, N204, and N226 each contribute to the GTP site. E69 is a Mg(2+) binding site. A disordered region spans residues 421–446 (EYQQYQDATAEEEDYEEEEEDEEVAA). Residues 429–446 (TAEEEDYEEEEEDEEVAA) show a composition bias toward acidic residues.

Belongs to the tubulin family. In terms of assembly, dimer of alpha and beta chains. A typical microtubule is a hollow water-filled tube with an outer diameter of 25 nm and an inner diameter of 15 nM. Alpha-beta heterodimers associate head-to-tail to form protofilaments running lengthwise along the microtubule wall with the beta-tubulin subunit facing the microtubule plus end conferring a structural polarity. Microtubules usually have 13 protofilaments but different protofilament numbers can be found in some organisms and specialized cells. Mg(2+) is required as a cofactor. In terms of tissue distribution, expressed in roots, second node, leaf sheaths, and suspension cultured cells.

It is found in the cytoplasm. The protein localises to the cytoskeleton. Functionally, tubulin is the major constituent of microtubules, a cylinder consisting of laterally associated linear protofilaments composed of alpha- and beta-tubulin heterodimers. Microtubules grow by the addition of GTP-tubulin dimers to the microtubule end, where a stabilizing cap forms. Below the cap, tubulin dimers are in GDP-bound state, owing to GTPase activity of alpha-tubulin. This Oryza sativa subsp. japonica (Rice) protein is Tubulin beta-3 chain (TUBB3).